A 603-amino-acid chain; its full sequence is Iron-sulfur clusters transporter ATM1, mitochondrial (603 aa).

The chain crosses the membrane as a helical span at residues 20 to 41 (VLLAVGLLVGGKVLNVQVPFFF). In terms of domain architecture, ABC transmembrane type-1 spans 20–310 (VLLAVGLLVG…LGSVYRELRQ (291 aa)). Over 42–64 (REIVDSLNVDIAATGGTVATVAG) the chain is Mitochondrial intermembrane. A helical membrane pass occupies residues 65–88 (TMIFAYGASRIGAVVSQELRNAVF). The Mitochondrial matrix portion of the chain corresponds to 89 to 137 (SSVAQKAIRRVATRTFGHLLNLDLNFHLSKQTGGLTRAIDRGTKGISFL). Residues 138-161 (LTSMVFHIVPTALEISMVCGILTY) traverse the membrane as a helical segment. Position 162 (Q162) is a topological domain, mitochondrial intermembrane. Residues 163–183 (FGWEFAAVTALTMSAYTAFTI) traverse the membrane as a helical segment. Over 184–249 (WTTAWRTKFR…SSIKVATSLA (66 aa)) the chain is Mitochondrial matrix. Glutathione contacts are provided by residues 189-193 (RTKFR) and 252-255 (NSGQ). A helical transmembrane segment spans residues 250–268 (FLNSGQNIIFSSALTIMMW). Topologically, residues 269-283 (LGAKGIVAGSLSVGD) are mitochondrial intermembrane. Residues 284–305 (LVLINQLVFQLSVPLNFLGSVY) form a helical membrane-spanning segment. G302 serves as a coordination point for glutathione. Residues 306 to 603 (RELRQSLLDM…SEREAPVPVK (298 aa)) lie on the Mitochondrial matrix side of the membrane. An ABC transporter domain is found at 345–581 (IRFDNVSFGY…NGLYTELWMA (237 aa)). ATP-binding positions include Y354 and 378 to 389 (GPSGCGKSTLLR).

Belongs to the ABC transporter superfamily. ABCB family. Heavy Metal importer (TC 3.A.1.210) subfamily. As to quaternary structure, homodimer.

Its subcellular location is the mitochondrion inner membrane. Performs an essential function in the generation of cytoplasmic iron-sulfur proteins by mediating the ATP-dependent export of Fe/S cluster precursors synthesized by NFS1 and other mitochondrial proteins. Hydrolyzes ATP. Binds glutathione and may function by transporting a glutathione-conjugated iron-sulfur compound. In Chaetomium globosum (strain ATCC 6205 / CBS 148.51 / DSM 1962 / NBRC 6347 / NRRL 1970) (Soil fungus), this protein is Iron-sulfur clusters transporter ATM1, mitochondrial.